The primary structure comprises 119 residues: Large ribosomal subunit protein uL22 (119 aa).

The protein belongs to the universal ribosomal protein uL22 family. Part of the 50S ribosomal subunit.

This protein binds specifically to 23S rRNA; its binding is stimulated by other ribosomal proteins, e.g. L4, L17, and L20. It is important during the early stages of 50S assembly. It makes multiple contacts with different domains of the 23S rRNA in the assembled 50S subunit and ribosome. Functionally, the globular domain of the protein is located near the polypeptide exit tunnel on the outside of the subunit, while an extended beta-hairpin is found that lines the wall of the exit tunnel in the center of the 70S ribosome. In Chlorobium phaeovibrioides (strain DSM 265 / 1930) (Prosthecochloris vibrioformis (strain DSM 265)), this protein is Large ribosomal subunit protein uL22.